A 600-amino-acid polypeptide reads, in one-letter code: ATP-dependent ubiquitin transferase-like protein Cap2 (600 aa).

The segment at 1-158 is E2-like domain; sequence MSTVVQQVPA…QEKLATTGDA (158 aa). The For E2-like domain role is filled by Cys-109. Residues 159–373 are linker domain; it reads VELPAFPDQS…DQLRTRGEAA (215 aa). An adenylation plus E1-like domain region spans residues 375–600; that stretch reads DIRSKKVLII…GTVEKEPHEY (226 aa). The active-site For E1-like domain is the Cys-548.

It in the C-terminal section; belongs to the HesA/MoeB/ThiF family. In terms of assembly, crystallizes as a Cap2 homodimer bound on each side by a CdnD monomer.

In terms of biological role, CD-NTase priming component of a CBASS antiviral system. CBASS (cyclic oligonucleotide-based antiphage signaling system) provides immunity against bacteriophages. The CD-NTase protein (CdnD) synthesizes cyclic nucleotides in response to infection; these serve as specific second messenger signals. The signals activate a diverse range of effectors, leading to bacterial cell death and thus abortive phage infection. A type II-C(AAG) CBASS system. Functionally, primes CdnD; acts as a protein transferase, conjugating CdnD, the CD-NTase, to unidentified target(s) in the cell via an E1-E2 ubiquitin transferase-like mechanism. Upon phage infection CdnD activates and makes cyclic nucleotides. During the conjugation reaction CdnD is transiently attached to AMP. Protein conjugation requires ATP. Its function is as follows. Protects E.coli against phage T2 infection. When the cdnD-cap2-cap3-cap4 operon is introduced in E.coli there is a more than 10(3) decrease in the efficiency of T2 plaque formation. The operon does not protect against phage T5 and only about 10-fold against T7. This chain is ATP-dependent ubiquitin transferase-like protein Cap2, found in Enterobacter hormaechei subsp. hoffmannii (strain UCI 50).